Here is a 342-residue protein sequence, read N- to C-terminus: Heparan sulfate glucosamine 3-O-sulfotransferase 6 (342 aa).

Residues 1–21 (MAGSGGLGGGAGGGQGAGAGQ) are disordered. Over 1–31 (MAGSGGLGGGAGGGQGAGAGQGAALRASRAP) the chain is Cytoplasmic. A helical; Signal-anchor for type II membrane protein transmembrane segment spans residues 32–49 (MLLVALVLGAYCLCALPG). The Lumenal segment spans residues 50-342 (RCPPAARAPA…QMTGQDFGWG (293 aa)). The disordered stretch occupies residues 55–85 (ARAPAPAPAPSEPSSSVHRPGAPGLPLASGP). Over residues 66–85 (EPSSSVHRPGAPGLPLASGP) the composition is skewed to low complexity. 100–104 (KGGTR) lines the 3'-phosphoadenylyl sulfate pocket. Substrate-binding positions include 122-128 (EPHFFDR) and 153-156 (KTPS). 2 residues coordinate 3'-phosphoadenylyl sulfate: Arg-181 and Ser-189. Residue 220–221 (WS) coordinates substrate. Asn-281 carries an N-linked (GlcNAc...) asparagine glycan. Cys-288 and Cys-300 are joined by a disulfide. Residue 305–309 (KGRPH) participates in 3'-phosphoadenylyl sulfate binding.

It belongs to the sulfotransferase 1 family.

It localises to the golgi apparatus membrane. It catalyses the reaction alpha-D-glucosaminyl-[heparan sulfate](n) + 3'-phosphoadenylyl sulfate = 3-sulfo-alpha-D-glucosaminyl-[heparan sulfate](n) + adenosine 3',5'-bisphosphate + H(+). Sulfotransferase that utilizes 3'-phospho-5'-adenylyl sulfate (PAPS) to catalyze the transfer of a sulfo group to heparan sulfate. The substrate-specific O-sulfation generates an enzyme-modified heparan sulfate which acts as a binding receptor to Herpes Simplex Virus-1 (HSV-1) and permits its entry. Unlike 3-OST-1, does not convert non-anticoagulant heparan sulfate to anticoagulant heparan sulfate. In Homo sapiens (Human), this protein is Heparan sulfate glucosamine 3-O-sulfotransferase 6 (HS3ST6).